A 204-amino-acid polypeptide reads, in one-letter code: MTNITVLEQLMQSFLSEYTFSNRDYFQIKSEPPKFDPDIILSKTFQNKYGICMDLNYAFSHVLKKHGFNCYLVKAFEKKSDGQFYDIYHLTIIVIINGCKYLADVGFGKYFSKPVILKNGVTVDKIRVEVPNMKNNENIYNILSHNKFIVQIKDSPLLSISDINDNYQNFFKAGPYDLPLCRKPYDRIYDQKVGDYIIPQKVEK.

Catalysis depends on Cys-52, which acts as the Acyl-thioester intermediate. Active-site residues include His-89 and Asp-104.

The protein belongs to the arylamine N-acetyltransferase family.

This is an uncharacterized protein from Acanthamoeba polyphaga mimivirus (APMV).